A 493-amino-acid chain; its full sequence is Guanosine-5'-triphosphate,3'-diphosphate pyrophosphatase (493 aa).

Belongs to the GppA/Ppx family. GppA subfamily.

It catalyses the reaction guanosine 3'-diphosphate 5'-triphosphate + H2O = guanosine 3',5'-bis(diphosphate) + phosphate + H(+). It participates in purine metabolism; ppGpp biosynthesis; ppGpp from GTP: step 2/2. Its function is as follows. Catalyzes the conversion of pppGpp to ppGpp. Guanosine pentaphosphate (pppGpp) is a cytoplasmic signaling molecule which together with ppGpp controls the 'stringent response', an adaptive process that allows bacteria to respond to amino acid starvation, resulting in the coordinated regulation of numerous cellular activities. This is Guanosine-5'-triphosphate,3'-diphosphate pyrophosphatase from Salmonella paratyphi B (strain ATCC BAA-1250 / SPB7).